Here is a 301-residue protein sequence, read N- to C-terminus: MKTKAGFVALIGKPNAGKSTLLNTLLNAHLALVSHKANATRKLMKCIVPFKDKEGYESQIIFLDTPGLHHQEKLLNQCMLSQALKAMGDAELCVFLASVHDDLKGYEEFLSLCQKPHILAVSKIDTAVHKQVLQKLQEYQQYASQFLALVPLSAKKSQNLNALLECISKHLSPSAWLFEKDLMSDEKMCDIYKEIIRESLFDFLSDEIPYESDVMIDKFIEEERIDKVYAHIIVEKESQKKIVIGKNGVNIKRIGTNARLKMQEVGEKKVFLNLQVIAQKSWSKEEKSLQKLGYIYQRNRD.

Positions 4–173 (KAGFVALIGK…LECISKHLSP (170 aa)) constitute an Era-type G domain. A G1 region spans residues 12 to 19 (GKPNAGKS). 12–19 (GKPNAGKS) contacts GTP. Residues 38–42 (NATRK) are G2. The interval 64 to 67 (DTPG) is G3. GTP-binding positions include 64–68 (DTPGL) and 122–125 (SKID). The G4 stretch occupies residues 122-125 (SKID). The segment at 152–154 (LSA) is G5. The KH type-2 domain maps to 204–280 (LSDEIPYESD…FLNLQVIAQK (77 aa)).

The protein belongs to the TRAFAC class TrmE-Era-EngA-EngB-Septin-like GTPase superfamily. Era GTPase family. As to quaternary structure, monomer.

The protein resides in the cytoplasm. It localises to the cell inner membrane. Functionally, an essential GTPase that binds both GDP and GTP, with rapid nucleotide exchange. Plays a role in 16S rRNA processing and 30S ribosomal subunit biogenesis and possibly also in cell cycle regulation and energy metabolism. The protein is GTPase Era of Helicobacter pylori (strain Shi470).